A 222-amino-acid chain; its full sequence is Ras-related protein RABA4d (222 aa).

Gly-22–Thr-29 lines the GTP pocket. An Effector region motif is present at residues Ser-44 to Phe-52. Residues Asp-70–Gln-74, Asn-128–Asp-131, and Ser-158–Ala-159 each bind GTP. Residues Cys-218 and Cys-219 are each lipidated (S-geranylgeranyl cysteine).

It belongs to the small GTPase superfamily. Rab family. Interacts with PI4KB1. In terms of tissue distribution, specifically expressed in pollen and localized to the tips of growing pollen tubes.

The protein resides in the cytoplasmic vesicle membrane. In terms of biological role, intracellular vesicle trafficking and protein transport. Plays an important role in the regulation of pollen tube tip growth. This chain is Ras-related protein RABA4d (RABA4D), found in Arabidopsis thaliana (Mouse-ear cress).